A 252-amino-acid chain; its full sequence is Thiazole synthase (252 aa).

Residue Lys95 is the Schiff-base intermediate with DXP of the active site. 1-deoxy-D-xylulose 5-phosphate-binding positions include Gly156, 182 to 183, and 204 to 205; these read AG and NT.

The protein belongs to the ThiG family. As to quaternary structure, homotetramer. Forms heterodimers with either ThiH or ThiS.

It localises to the cytoplasm. It catalyses the reaction [ThiS sulfur-carrier protein]-C-terminal-Gly-aminoethanethioate + 2-iminoacetate + 1-deoxy-D-xylulose 5-phosphate = [ThiS sulfur-carrier protein]-C-terminal Gly-Gly + 2-[(2R,5Z)-2-carboxy-4-methylthiazol-5(2H)-ylidene]ethyl phosphate + 2 H2O + H(+). Its pathway is cofactor biosynthesis; thiamine diphosphate biosynthesis. In terms of biological role, catalyzes the rearrangement of 1-deoxy-D-xylulose 5-phosphate (DXP) to produce the thiazole phosphate moiety of thiamine. Sulfur is provided by the thiocarboxylate moiety of the carrier protein ThiS. In vitro, sulfur can be provided by H(2)S. This Shewanella sp. (strain ANA-3) protein is Thiazole synthase.